The primary structure comprises 1129 residues: Eukaryotic translation initiation factor 3 subunit A (1129 aa).

Residues 319–502 form the PCI domain; that stretch reads LQRMAAHVLL…NSIYFGTDLT (184 aa). Disordered stretches follow at residues 590–633 and 836–1129; these read NNAR…NEIQ and AAEA…VKRR. Composition is skewed to basic and acidic residues over residues 836-903, 923-964, 971-985, 994-1044, and 1053-1076; these read AAEA…RSER, DRND…KDTD, WRVRREPVEPQRERG, GRDD…DQPQ, and DSPRQNDRDNRDNRRPAGDRRDIR. A compositionally biased stretch (gly residues) spans 1080–1091; sequence PKEGGGGGGGGN. Residues 1098-1119 are compositionally biased toward basic and acidic residues; sequence PRDEKPPVKRDQPQDKENKAGD.

Belongs to the eIF-3 subunit A family. As to quaternary structure, component of the eukaryotic translation initiation factor 3 (eIF-3) complex. The eIF-3 complex interacts with pix.

The protein localises to the cytoplasm. In terms of biological role, RNA-binding component of the eukaryotic translation initiation factor 3 (eIF-3) complex, which is involved in protein synthesis of a specialized repertoire of mRNAs and, together with other initiation factors, stimulates binding of mRNA and methionyl-tRNAi to the 40S ribosome. The eIF-3 complex specifically targets and initiates translation of a subset of mRNAs involved in cell proliferation. The sequence is that of Eukaryotic translation initiation factor 3 subunit A from Drosophila mojavensis (Fruit fly).